The following is a 339-amino-acid chain: Spore coat polysaccharide biosynthesis protein SpsG (339 aa).

The chain crosses the membrane as a helical span at residues I241 to L261.

To M.jannaschii MJ1062.

The protein resides in the cell membrane. It participates in spore coat biogenesis; spore coat polysaccharide biosynthesis. This is Spore coat polysaccharide biosynthesis protein SpsG (spsG) from Bacillus subtilis (strain 168).